A 94-amino-acid chain; its full sequence is Aspartyl/glutamyl-tRNA(Asn/Gln) amidotransferase subunit C (94 aa).

This sequence belongs to the GatC family. In terms of assembly, heterotrimer of A, B and C subunits.

The catalysed reaction is L-glutamyl-tRNA(Gln) + L-glutamine + ATP + H2O = L-glutaminyl-tRNA(Gln) + L-glutamate + ADP + phosphate + H(+). The enzyme catalyses L-aspartyl-tRNA(Asn) + L-glutamine + ATP + H2O = L-asparaginyl-tRNA(Asn) + L-glutamate + ADP + phosphate + 2 H(+). Allows the formation of correctly charged Asn-tRNA(Asn) or Gln-tRNA(Gln) through the transamidation of misacylated Asp-tRNA(Asn) or Glu-tRNA(Gln) in organisms which lack either or both of asparaginyl-tRNA or glutaminyl-tRNA synthetases. The reaction takes place in the presence of glutamine and ATP through an activated phospho-Asp-tRNA(Asn) or phospho-Glu-tRNA(Gln). In Syntrophomonas wolfei subsp. wolfei (strain DSM 2245B / Goettingen), this protein is Aspartyl/glutamyl-tRNA(Asn/Gln) amidotransferase subunit C.